The sequence spans 103 residues: ATP-dependent Clp protease adapter protein ClpS (103 aa).

It belongs to the ClpS family. Binds to the N-terminal domain of the chaperone ClpA.

Involved in the modulation of the specificity of the ClpAP-mediated ATP-dependent protein degradation. The polypeptide is ATP-dependent Clp protease adapter protein ClpS (Nitrosomonas eutropha (strain DSM 101675 / C91 / Nm57)).